The sequence spans 139 residues: Prostate-associated microseminoprotein (139 aa).

Residues 1-35 (MALRMLWAGQAKGILGGWRTICLVVSLFLQHPGVS) form the signal peptide. 5 disulfide bridges follow: C38-C78, C46-C69, C64-C100, C67-C77, and C91-C114. Residues 116–139 (GGGPDLEWGSANTPAPGASAPHSS) are disordered.

Belongs to the beta-microseminoprotein family.

It is found in the secreted. Functionally, acts as a ligand for C-C chemokine receptor CCR2. Signals through binding and activation of CCR2 and induces a strong chemotactic response and mobilization of intracellular calcium ions. Exhibits a chemotactic activity for monocytes and lymphocytes but not neutrophils. The protein is Prostate-associated microseminoprotein (Msmp) of Mus musculus (Mouse).